A 150-amino-acid polypeptide reads, in one-letter code: Avidin-related protein 2 (150 aa).

An N-terminal signal peptide occupies residues 1 to 24; it reads MVHATSPLLLLLLLSLALVAPSLS. In terms of domain architecture, Avidin-like spans 26–147; the sequence is RKCSLTGEWD…GNNDFTRQHT (122 aa). Residues C28 and C105 are joined by a disulfide bond. Biotin-binding residues include N36, S40, Y57, T59, and D63. 2 N-linked (GlcNAc...) asparagine glycosylation sites follow: N67 and N93. Positions 95, 99, and 140 each coordinate biotin.

Homotetramer. Post-translationally, glycosylated.

It localises to the secreted. In terms of biological role, forms a strong non-covalent specific complex with biotin. In Gallus gallus (Chicken), this protein is Avidin-related protein 2 (AVR2).